A 312-amino-acid polypeptide reads, in one-letter code: Phosphoribosylglycinamide formyltransferase, chloroplastic (312 aa).

The N-terminal 73 residues, 1-73 (MEAQQIISRF…EVCSSSWRIW (73 aa)), are a transit peptide targeting the chloroplast. A N(1)-(5-phospho-beta-D-ribosyl)glycinamide-binding site is contributed by 109–111 (GSN). (6R)-10-formyltetrahydrofolate is bound by residues K162, 187–190 (LKLI), and N204. H206 acts as the Proton donor in catalysis. D247 contributes to the (6R)-10-formyltetrahydrofolate binding site. Residue E276 coordinates N(1)-(5-phospho-beta-D-ribosyl)glycinamide.

The protein belongs to the GART family.

The protein localises to the plastid. It localises to the chloroplast. The enzyme catalyses N(1)-(5-phospho-beta-D-ribosyl)glycinamide + (6R)-10-formyltetrahydrofolate = N(2)-formyl-N(1)-(5-phospho-beta-D-ribosyl)glycinamide + (6S)-5,6,7,8-tetrahydrofolate + H(+). It functions in the pathway purine metabolism; IMP biosynthesis via de novo pathway; N(2)-formyl-N(1)-(5-phospho-D-ribosyl)glycinamide from N(1)-(5-phospho-D-ribosyl)glycinamide (10-formyl THF route): step 1/1. This is Phosphoribosylglycinamide formyltransferase, chloroplastic (PUR3) from Vigna unguiculata (Cowpea).